Consider the following 441-residue polypeptide: Glutamyl-tRNA reductase (441 aa).

Substrate is bound by residues 49-52, S109, 114-116, and Q120; these read TCNR and EGQ. Catalysis depends on C50, which acts as the Nucleophile. 198 to 203 contributes to the NADP(+) binding site; it reads GAGRMS.

The protein belongs to the glutamyl-tRNA reductase family. Homodimer.

It carries out the reaction (S)-4-amino-5-oxopentanoate + tRNA(Glu) + NADP(+) = L-glutamyl-tRNA(Glu) + NADPH + H(+). It participates in porphyrin-containing compound metabolism; protoporphyrin-IX biosynthesis; 5-aminolevulinate from L-glutamyl-tRNA(Glu): step 1/2. It functions in the pathway porphyrin-containing compound metabolism; chlorophyll biosynthesis. Functionally, catalyzes the NADPH-dependent reduction of glutamyl-tRNA(Glu) to glutamate 1-semialdehyde (GSA). This is Glutamyl-tRNA reductase from Prochlorococcus marinus (strain NATL2A).